The primary structure comprises 794 residues: Protein IQ-DOMAIN 32 (794 aa).

Residues 15-101 (CSGGDDTSAD…QSFSVDEKKS (87 aa)) are disordered. 2 stretches are compositionally biased toward polar residues: residues 23-33 (ADPNSTALENK) and 56-65 (SVVSETTPAS). 5 positions are modified to phosphoserine: serine 78, serine 80, serine 142, serine 193, and serine 195. Polar residues predominate over residues 80–95 (SPDNNNVSEKQQQSFS). IQ domains are found at residues 214 to 242 (DESVIVVIQAAVRGFLARRELLRSKKVIK) and 243 to 265 (LQAAVRGHLVRSQAMGSLRCVQA). The interval 230 to 241 (ARRELLRSKKVI) is calmodulin-binding. Residues 277–296 (HSTKDGSRVSATSDKSEPNA) are disordered. Phosphoserine is present on serine 369. Residues 375 to 417 (VNSDSTVENKTETDMPSYEASKVEGQNVELSETEKMSQYDSPE) are disordered. Serine 459 carries the phosphoserine modification. 2 disordered regions span residues 472–555 (ELTS…RVEA) and 578–794 (ATSM…KWQR). Positions 473–486 (LTSSTGSNKAMTLS) are enriched in polar residues. The span at 487–500 (SKDDVLGEEGKTDI) shows a compositional bias: basic and acidic residues. Residues serine 502 and serine 544 each carry the phosphoserine modification. Basic and acidic residues-rich tracts occupy residues 539 to 555 (TLEKKSDAEGAEPRVEA) and 585 to 607 (EDPKEKVENAKDEVEISATHHEP). Positions 643–654 (SQATPASQASSS) are enriched in low complexity. Positions 657-664 (ARKGKSEK) match the Nuclear localization signal motif. Over residues 768-786 (NGKQVSPRIQRSASQAQQG) the composition is skewed to polar residues.

The protein belongs to the IQD family. In terms of assembly, binds to multiple calmodulin (CaM) in the presence of Ca(2+) and CaM-like proteins.

Its subcellular location is the nucleus. The protein localises to the cytoplasm. It is found in the cytoskeleton. In terms of biological role, may be involved in cooperative interactions with calmodulins or calmodulin-like proteins. Recruits calmodulin proteins to microtubules, thus being a potential scaffold in cellular signaling and trafficking. May associate with nucleic acids and regulate gene expression at the transcriptional or post-transcriptional level. In Arabidopsis thaliana (Mouse-ear cress), this protein is Protein IQ-DOMAIN 32.